An 878-amino-acid polypeptide reads, in one-letter code: Alanine--tRNA ligase (878 aa).

H567, H571, C668, and H672 together coordinate Zn(2+).

This sequence belongs to the class-II aminoacyl-tRNA synthetase family. It depends on Zn(2+) as a cofactor.

The protein localises to the cytoplasm. It carries out the reaction tRNA(Ala) + L-alanine + ATP = L-alanyl-tRNA(Ala) + AMP + diphosphate. Catalyzes the attachment of alanine to tRNA(Ala) in a two-step reaction: alanine is first activated by ATP to form Ala-AMP and then transferred to the acceptor end of tRNA(Ala). Also edits incorrectly charged Ser-tRNA(Ala) and Gly-tRNA(Ala) via its editing domain. This chain is Alanine--tRNA ligase, found in Magnetococcus marinus (strain ATCC BAA-1437 / JCM 17883 / MC-1).